The primary structure comprises 218 residues: Carnitine transport permease protein OpuCB (218 aa).

The region spanning 19-198 is the ABC transmembrane type-1 domain; sequence TWQHLFISLS…ILALVVEFAL (180 aa). 5 helical membrane-spanning segments follow: residues 23-43, 48-68, 79-101, 149-169, and 179-199; these read LFISLSAVILGIAVAVPTGIL, PKVANFVIGVVSVLQTVPSLA, VGTLPAIIALFIYALLPILRNTF, VIAWATLASYIGAGGLGDFIF, and LILGGAIPVTILALVVEFALG.

The protein belongs to the binding-protein-dependent transport system permease family. The complex is composed of two ATP-binding proteins (OpuCA), two transmembrane proteins (OpuCB and OpuCD) and a solute-binding protein (OpuCC).

Its subcellular location is the cell membrane. Functionally, part of the ABC transporter complex OpuCABCD involved in carnitine uptake. Probably responsible for the translocation of the substrate across the membrane. Involved, with BetL and GbuABC, in osmoprotection and cryoprotection of Listeria. This Listeria monocytogenes protein is Carnitine transport permease protein OpuCB (opuCB).